Here is a 283-residue protein sequence, read N- to C-terminus: Bifunctional protein FolD (283 aa).

NADP(+) contacts are provided by residues 165–167 (GRG), T192, and V233.

The protein belongs to the tetrahydrofolate dehydrogenase/cyclohydrolase family. As to quaternary structure, homodimer.

It catalyses the reaction (6R)-5,10-methylene-5,6,7,8-tetrahydrofolate + NADP(+) = (6R)-5,10-methenyltetrahydrofolate + NADPH. The enzyme catalyses (6R)-5,10-methenyltetrahydrofolate + H2O = (6R)-10-formyltetrahydrofolate + H(+). It participates in one-carbon metabolism; tetrahydrofolate interconversion. Functionally, catalyzes the oxidation of 5,10-methylenetetrahydrofolate to 5,10-methenyltetrahydrofolate and then the hydrolysis of 5,10-methenyltetrahydrofolate to 10-formyltetrahydrofolate. The chain is Bifunctional protein FolD from Mycolicibacterium smegmatis (strain ATCC 700084 / mc(2)155) (Mycobacterium smegmatis).